The chain runs to 358 residues: Tripartite motif-containing protein 54 (358 aa).

The RING-type zinc-finger motif lies at 26-82; that stretch reads CPICLEMFSKPVVILPCQHNLCRKCANDVFQASNPLWQSRGSTTVSSGGRFRCPSCR. A B box-type zinc finger spans residues 121-163; sequence EQHLMCEEHEEEKINIYCLSCEVPTCSLCKVFGAHKDCEVAPL. 4 residues coordinate Zn(2+): C126, H129, C149, and H155. The segment at 168–211 is mediates microtubule-binding and homooligomerization; that stretch reads KRQKSELSDGIAMLVAGNDRVQAVITQMEEVCQTIEDNSRRQKQ. The stretch at 220-258 forms a coiled coil; the sequence is LCAVLEERKGELLQALAREQEEKLQRVRGLIRQYGDHLE. The region spanning 271 to 329 is the COS domain; sequence MEEPQMALYLQQAKELINKVGAMSKVELAGRPEPGYESMEQFTVRVEHVAEMLRTIDFQ. The segment at 326–358 is disordered; it reads IDFQPGASGEEEEVAPDGEEGSAGPEEERPDGP. Acidic residues predominate over residues 334–345; sequence GEEEEVAPDGEE.

Homooligomer and heterooligomer. Interacts with tubulin. Interacts with TRIM63 and probably with TRIM55. In terms of tissue distribution, specifically expressed in heart and skeletal muscle.

The protein localises to the cytoplasm. Its subcellular location is the cytoskeleton. The protein resides in the myofibril. It localises to the sarcomere. It is found in the z line. Its function is as follows. May bind and stabilize microtubules during myotubes formation. This is Tripartite motif-containing protein 54 (TRIM54) from Homo sapiens (Human).